A 660-amino-acid chain; its full sequence is Bifunctional polymyxin resistance protein ArnA (660 aa).

The formyltransferase ArnAFT stretch occupies residues Met1–Ile304. The Proton donor; for formyltransferase activity role is filled by His104. (6R)-10-formyltetrahydrofolate-binding positions include Arg114 and Val136–Asp140. Residues Arg314–Ala660 are dehydrogenase ArnADH. NAD(+) contacts are provided by residues Asp347 and Asp368 to Ile369. Residues Ala393, Tyr398, and Thr432–Ser433 each bind UDP-alpha-D-glucuronate. The active-site Proton acceptor; for decarboxylase activity is Glu434. Residues Arg460, Asn492, Lys526–Arg535, and Tyr613 contribute to the UDP-alpha-D-glucuronate site. Residue Arg619 is the Proton donor; for decarboxylase activity of the active site.

It in the N-terminal section; belongs to the Fmt family. UDP-L-Ara4N formyltransferase subfamily. The protein in the C-terminal section; belongs to the NAD(P)-dependent epimerase/dehydratase family. UDP-glucuronic acid decarboxylase subfamily. Homohexamer, formed by a dimer of trimers.

The enzyme catalyses UDP-alpha-D-glucuronate + NAD(+) = UDP-beta-L-threo-pentopyranos-4-ulose + CO2 + NADH. It carries out the reaction UDP-4-amino-4-deoxy-beta-L-arabinose + (6R)-10-formyltetrahydrofolate = UDP-4-deoxy-4-formamido-beta-L-arabinose + (6S)-5,6,7,8-tetrahydrofolate + H(+). Its pathway is nucleotide-sugar biosynthesis; UDP-4-deoxy-4-formamido-beta-L-arabinose biosynthesis; UDP-4-deoxy-4-formamido-beta-L-arabinose from UDP-alpha-D-glucuronate: step 1/3. The protein operates within nucleotide-sugar biosynthesis; UDP-4-deoxy-4-formamido-beta-L-arabinose biosynthesis; UDP-4-deoxy-4-formamido-beta-L-arabinose from UDP-alpha-D-glucuronate: step 3/3. It functions in the pathway bacterial outer membrane biogenesis; lipopolysaccharide biosynthesis. Its function is as follows. Bifunctional enzyme that catalyzes the oxidative decarboxylation of UDP-glucuronic acid (UDP-GlcUA) to UDP-4-keto-arabinose (UDP-Ara4O) and the addition of a formyl group to UDP-4-amino-4-deoxy-L-arabinose (UDP-L-Ara4N) to form UDP-L-4-formamido-arabinose (UDP-L-Ara4FN). The modified arabinose is attached to lipid A and is required for resistance to polymyxin and cationic antimicrobial peptides. This chain is Bifunctional polymyxin resistance protein ArnA, found in Enterobacter sp. (strain 638).